A 77-amino-acid polypeptide reads, in one-letter code: Defensin-like protein 91 (77 aa).

The first 27 residues, 1–27 (METKKISYFLLPSLMIVALIFQPMCSA), serve as a signal peptide directing secretion. Disulfide bonds link C38–C75, C43–C64, C49–C73, and C53–C74.

The protein belongs to the DEFL family.

The protein localises to the secreted. The protein is Defensin-like protein 91 (LCR47) of Arabidopsis thaliana (Mouse-ear cress).